An 842-amino-acid polypeptide reads, in one-letter code: Elongation factor G, mitochondrial (842 aa).

Residues 1 to 58 (MVAIPRVAAARSLARQLARQSLRTTSFASAPVRIAIASTPLARSPSSFRSLSSSTRRS) constitute a mitochondrion transit peptide. One can recognise a tr-type G domain in the interval 93 to 398 (VRQRNVGISA…GVCSYLPNPA (306 aa)). GTP is bound by residues 102-109 (AHIDSGKT), 196-200 (DTPGH), and 250-253 (NKMD). The segment at 423 to 442 (AGEDQEAAAEARKNAAPPVL) is disordered.

Belongs to the TRAFAC class translation factor GTPase superfamily. Classic translation factor GTPase family. EF-G/EF-2 subfamily.

Its subcellular location is the mitochondrion. It participates in protein biosynthesis; polypeptide chain elongation. Mitochondrial GTPase that catalyzes the GTP-dependent ribosomal translocation step during translation elongation. During this step, the ribosome changes from the pre-translocational (PRE) to the post-translocational (POST) state as the newly formed A-site-bound peptidyl-tRNA and P-site-bound deacylated tRNA move to the P and E sites, respectively. Catalyzes the coordinated movement of the two tRNA molecules, the mRNA and conformational changes in the ribosome. The sequence is that of Elongation factor G, mitochondrial from Mycosarcoma maydis (Corn smut fungus).